Consider the following 229-residue polypeptide: Type III pantothenate kinase (229 aa).

7–14 (DVGNSSVD) is an ATP binding site. Substrate contacts are provided by residues tyrosine 78 and 85–88 (GTDR). Residue aspartate 87 is the Proton acceptor of the active site. Threonine 110 lines the ATP pocket. Threonine 161 serves as a coordination point for substrate.

Belongs to the type III pantothenate kinase family. As to quaternary structure, homodimer. NH4(+) is required as a cofactor. The cofactor is K(+).

The protein localises to the cytoplasm. It catalyses the reaction (R)-pantothenate + ATP = (R)-4'-phosphopantothenate + ADP + H(+). It functions in the pathway cofactor biosynthesis; coenzyme A biosynthesis; CoA from (R)-pantothenate: step 1/5. Catalyzes the phosphorylation of pantothenate (Pan), the first step in CoA biosynthesis. This Aquifex aeolicus (strain VF5) protein is Type III pantothenate kinase.